We begin with the raw amino-acid sequence, 311 residues long: MKVAVLGAAGGIGQALALLLKTQLPAGSKLSLYDIAPVTPGVAVDLSHIPTDVEVKGFAGEDPTAALEGADVVLISAGVARKPGMDRSDLFNINAGIVRNLVEKCAATSPKALIGIITNPVNTTVAIAAEVLKKAGVYDKNRLFGVTTLDVIRSETFVAAAKGLNVADVKVNVIGGHSGVTILPLLSQIEGVSFTDEEVAALTTRIQNAGTEVVEAKAGGGSATLSMGQAACRFGLSLVRGLQGEANVVECAYVDGGSEHAEFFAQPVVLGKNGVEQVLAYGDVSAFEANARDAMLDTLKADIDLGIEFVK.

Residues 7–13 and Asp34 contribute to the NAD(+) site; that span reads GAAGGIG. Substrate contacts are provided by Arg81 and Arg87. NAD(+) is bound by residues Asn94 and 117–119; that span reads ITN. Substrate contacts are provided by Asn119 and Arg153. His177 serves as the catalytic Proton acceptor. Met227 serves as a coordination point for NAD(+).

Belongs to the LDH/MDH superfamily. MDH type 1 family. As to quaternary structure, homodimer.

The catalysed reaction is (S)-malate + NAD(+) = oxaloacetate + NADH + H(+). Its function is as follows. Catalyzes the reversible oxidation of malate to oxaloacetate. The sequence is that of Malate dehydrogenase from Shewanella piezotolerans (strain WP3 / JCM 13877).